The primary structure comprises 260 residues: Ribosomal RNA small subunit methyltransferase A (260 aa).

The S-adenosyl-L-methionine site is built by Leu-23, Gly-48, Glu-69, Asp-94, and Asn-110.

It belongs to the class I-like SAM-binding methyltransferase superfamily. rRNA adenine N(6)-methyltransferase family. RsmA subfamily.

Its subcellular location is the cytoplasm. The catalysed reaction is adenosine(1518)/adenosine(1519) in 16S rRNA + 4 S-adenosyl-L-methionine = N(6)-dimethyladenosine(1518)/N(6)-dimethyladenosine(1519) in 16S rRNA + 4 S-adenosyl-L-homocysteine + 4 H(+). Functionally, specifically dimethylates two adjacent adenosines (A1518 and A1519) in the loop of a conserved hairpin near the 3'-end of 16S rRNA in the 30S particle. May play a critical role in biogenesis of 30S subunits. The chain is Ribosomal RNA small subunit methyltransferase A from Thermotoga neapolitana (strain ATCC 49049 / DSM 4359 / NBRC 107923 / NS-E).